We begin with the raw amino-acid sequence, 303 residues long: Glycosyltransferase AglJ (303 aa).

2 consecutive transmembrane segments (helical) span residues 230 to 250 and 263 to 283; these read FYFG…ALYV and VIAV…MFGV.

The protein belongs to the glycosyltransferase 2 family.

The protein localises to the cell membrane. It functions in the pathway cell surface structure biogenesis; S-layer biogenesis. Functionally, involved in the assembly of a N-linked pentasaccharide that decorates the S-layer glycoprotein and flagellins. Adds the first hexose subunit of the pentasaccharide to the dolichol phosphate carrier. The sequence is that of Glycosyltransferase AglJ (aglJ) from Haloferax volcanii (strain ATCC 29605 / DSM 3757 / JCM 8879 / NBRC 14742 / NCIMB 2012 / VKM B-1768 / DS2) (Halobacterium volcanii).